The primary structure comprises 155 residues: Peptide deformylase (155 aa).

2 residues coordinate Fe cation: C88 and H130. Residue E131 is part of the active site. H134 contacts Fe cation.

Belongs to the polypeptide deformylase family. Requires Fe(2+) as cofactor.

The enzyme catalyses N-terminal N-formyl-L-methionyl-[peptide] + H2O = N-terminal L-methionyl-[peptide] + formate. Removes the formyl group from the N-terminal Met of newly synthesized proteins. Requires at least a dipeptide for an efficient rate of reaction. N-terminal L-methionine is a prerequisite for activity but the enzyme has broad specificity at other positions. This is Peptide deformylase from Pelotomaculum thermopropionicum (strain DSM 13744 / JCM 10971 / SI).